A 119-amino-acid chain; its full sequence is Non-specific lipid-transfer protein 11 (119 aa).

Residues 1–28 form the signal peptide; sequence MRNITTTTRKMLLLVITILLGIAYHGEA. Disulfide bonds link cysteine 31–cysteine 78, cysteine 41–cysteine 55, cysteine 56–cysteine 101, and cysteine 76–cysteine 115.

This sequence belongs to the plant LTP family.

Functionally, plant non-specific lipid-transfer proteins transfer phospholipids as well as galactolipids across membranes. May play a role in wax or cutin deposition in the cell walls of expanding epidermal cells and certain secretory tissues. This chain is Non-specific lipid-transfer protein 11 (LTP11), found in Arabidopsis thaliana (Mouse-ear cress).